Here is a 122-residue protein sequence, read N- to C-terminus: Holo-[acyl-carrier-protein] synthase (122 aa).

Positions 8 and 60 each coordinate Mg(2+).

The protein belongs to the P-Pant transferase superfamily. AcpS family. Mg(2+) serves as cofactor.

The protein localises to the cytoplasm. It catalyses the reaction apo-[ACP] + CoA = holo-[ACP] + adenosine 3',5'-bisphosphate + H(+). In terms of biological role, transfers the 4'-phosphopantetheine moiety from coenzyme A to a Ser of acyl-carrier-protein. This chain is Holo-[acyl-carrier-protein] synthase, found in Anaplasma phagocytophilum (strain HZ).